The chain runs to 72 residues: Translation initiation factor IF-1 (72 aa).

In terms of domain architecture, S1-like spans 1–72 (MAKEDVIEFS…TKGRITFRYK (72 aa)).

Belongs to the IF-1 family. As to quaternary structure, component of the 30S ribosomal translation pre-initiation complex which assembles on the 30S ribosome in the order IF-2 and IF-3, IF-1 and N-formylmethionyl-tRNA(fMet); mRNA recruitment can occur at any time during PIC assembly.

The protein resides in the cytoplasm. Its function is as follows. One of the essential components for the initiation of protein synthesis. Stabilizes the binding of IF-2 and IF-3 on the 30S subunit to which N-formylmethionyl-tRNA(fMet) subsequently binds. Helps modulate mRNA selection, yielding the 30S pre-initiation complex (PIC). Upon addition of the 50S ribosomal subunit IF-1, IF-2 and IF-3 are released leaving the mature 70S translation initiation complex. This Paramagnetospirillum magneticum (strain ATCC 700264 / AMB-1) (Magnetospirillum magneticum) protein is Translation initiation factor IF-1.